Consider the following 420-residue polypeptide: MAPK/MAK/MRK overlapping kinase (420 aa).

The 282-residue stretch at 4–285 (YKAIGKIGEG…AHQALQHPYF (282 aa)) folds into the Protein kinase domain. ATP contacts are provided by residues 10–18 (IGEGTFSEV) and Lys33. Asp128 serves as the catalytic Proton acceptor. Residues 311-322 (PESSSHNWSFSQ) are compositionally biased toward polar residues. The disordered stretch occupies residues 311-344 (PESSSHNWSFSQEGRKQKQSLRHEEGHARRQGPT). Basic and acidic residues predominate over residues 323–338 (EGRKQKQSLRHEEGHA).

Belongs to the protein kinase superfamily. CMGC Ser/Thr protein kinase family. CDC2/CDKX subfamily. Mg(2+) serves as cofactor. Autophosphorylated. Highly expressed in testis, and less in kidney, brain and lung.

The protein localises to the cytoplasm. It localises to the cell projection. It is found in the cilium. The protein resides in the nucleus. The catalysed reaction is L-seryl-[protein] + ATP = O-phospho-L-seryl-[protein] + ADP + H(+). The enzyme catalyses L-threonyl-[protein] + ATP = O-phospho-L-threonyl-[protein] + ADP + H(+). Phosphorylation appears to increase the enzymatic activity. In terms of biological role, able to phosphorylate several exogenous substrates and to undergo autophosphorylation. Negatively regulates cilium length in a cAMP and mTORC1 signaling-dependent manner. This chain is MAPK/MAK/MRK overlapping kinase (Mok), found in Mus musculus (Mouse).